The sequence spans 343 residues: Selenide, water dikinase (343 aa).

Sec13 is a catalytic residue. Sec13 is a non-standard amino acid (selenocysteine). Residues Lys16 and 44 to 46 (TAD) each bind ATP. Residue Asp47 coordinates Mg(2+). ATP contacts are provided by residues Asp64, Asp87, and 135 to 137 (GHT). A Mg(2+)-binding site is contributed by Asp87. Residue Asp223 participates in Mg(2+) binding.

This sequence belongs to the selenophosphate synthase 1 family. Class I subfamily. In terms of assembly, homodimer. Requires Mg(2+) as cofactor.

It carries out the reaction hydrogenselenide + ATP + H2O = selenophosphate + AMP + phosphate + 2 H(+). In terms of biological role, synthesizes selenophosphate from selenide and ATP. The sequence is that of Selenide, water dikinase from Geobacter metallireducens (strain ATCC 53774 / DSM 7210 / GS-15).